Here is a 93-residue protein sequence, read N- to C-terminus: Small ribosomal subunit protein uS19 (93 aa).

This sequence belongs to the universal ribosomal protein uS19 family.

In terms of biological role, protein S19 forms a complex with S13 that binds strongly to the 16S ribosomal RNA. The polypeptide is Small ribosomal subunit protein uS19 (Clostridium perfringens (strain ATCC 13124 / DSM 756 / JCM 1290 / NCIMB 6125 / NCTC 8237 / Type A)).